A 205-amino-acid polypeptide reads, in one-letter code: Thymidylate kinase (205 aa).

11–18 is a binding site for ATP; sequence GVEGSGKS.

Belongs to the thymidylate kinase family.

The catalysed reaction is dTMP + ATP = dTDP + ADP. In terms of biological role, phosphorylation of dTMP to form dTDP in both de novo and salvage pathways of dTTP synthesis. The sequence is that of Thymidylate kinase from Ruthia magnifica subsp. Calyptogena magnifica.